The following is a 768-amino-acid chain: Disabled homolog 2 (768 aa).

Positions 1–16 (MSNEVETSTTNGQPDQ) are enriched in polar residues. The interval 1-36 (MSNEVETSTTNGQPDQQAAPKAPSKKEKKKGSEKTD) is disordered. S2 bears the N-acetylserine mark. Phosphoserine is present on S2. Residues 45–196 (GDGVKYKAKL…KAEENGSEAL (152 aa)) enclose the PID domain. At Y170 the chain carries Phosphotyrosine. S193 carries the phosphoserine modification. The segment at 230-447 (ESRDILLVDL…KPGRGRRTAK (218 aa)) is required for localization to clathrin-coated pits. The tract at residues 285–449 (NFFPTPNPDP…GRGRRTAKSS (165 aa)) is disordered. 2 consecutive short sequence motifs (DPF) follow at residues 293–295 (DPF) and 298–300 (DPF). Composition is skewed to polar residues over residues 303-317 (PDQSAPSSFHSLTSA), 325-334 (GSLSTPQSKG), and 367-381 (PSSQTQQAVRTQNGV). Residues S326 and S328 each carry the phosphoserine; in mitosis modification. S401 carries the phosphoserine modification. Residues 601–731 (TISTQSFPQP…GVLSGTKSAD (131 aa)) are sufficient for interaction with GRB2. A required for interaction with CSK region spans residues 619-627 (PPQPPPRNG). Residues 649 to 768 (KEVKEMFKDF…HRSPFGNPFA (120 aa)) form a required for interaction with MYO6 region. 2 disordered regions span residues 660–682 (LRQPPLVPSRKGETPSSGTSSAF) and 709–768 (NKIN…NPFA). The tract at residues 663-671 (PPLVPSRKG) is required for interaction with GRB2 and CSK. At T673 the chain carries Phosphothreonine. Residue S675 is modified to Phosphoserine. Residues 708–724 (LNKINEPPKPAPRQGVL) form a sufficient for interaction with SH3KBP1 SH3 domain region. The span at 724–755 (LSGTKSADNSLENPFSKGFSSTNPSVVSQPAS) shows a compositional bias: polar residues. Phosphoserine is present on residues S729 and S761.

Can interact (via PID domain) with LDLR, APP, APLP1 and APLP2, and weakly with INPP5D (via NPXY motifs); the interaction is impaired by tyrosine phosphorylation of the respective NPXY motifs. Can weakly interact (via PID domain) with LRP1 (via NPXY motif); the interaction is enhanced by tyrosine phosphorylation of the NPXY motif. Interacts with LRP2 (via NPXY motif); the interaction is not affected by tyrosine phosphorylation of the NPXY motif. Interacts with clathrin; in vitro can assemble clathrin triskelia into polyhedral coats. Interacts with AP2A2, ITGB1, ITGB3, ITGB5, PIAS2, DAB2IP, NOSTRIN, FCHO1, DVL3, EPS15, ITSN1 and EPS15L1. Interacts with SH3KBP1 (via SH3 domains). Interacts with GRB2; competes with SOS1 for binding to GRB2 and the interaction is enhanced by EGF and NT-3 stimulation. Interacts with MAP3K7; the interaction is induced by TGF-beta stimulation and may mediate TGF-beta stimulated JNK activation. Interacts with AXIN1 and PPP1CA; the interactions are mutually exclusive. Interacts with the globular tail of MYO6. Interacts (via DPF motifs) with FCHO2; the interaction is direct and required for DAB2-mediated LDLR endocytosis. Interacts with LRP6; the interaction involves LRP6 phosphorylation by CK2 and sequesters LRP6 towards clathrin-mediated endocytosis. Associates with the TGF-beta receptor complex. Interacts with SMAD2 and SMAD3; the interactions are enhanced upon TGF-beta stimulation. Interacts with GRB2; the interaction is enhanced by EGF and NT-3 stimulation. Interacts with SRC; the interaction is enhanced by EGF stimulation. Interacts with GRB2; the interaction is enhanced by EGF and NT-3 stimulation. Interacts (via NPXY motif) with DAB2 (via PID domain). Phosphorylated. Phosphorylation during mitosis is leading to membrane displacement. There is some ambiguity for the mitotic phosphosite Ser-326/328. As to expression, prostate.

The protein resides in the cytoplasm. The protein localises to the cytoplasmic vesicle. It localises to the clathrin-coated vesicle membrane. It is found in the membrane. Its subcellular location is the clathrin-coated pit. Functionally, adapter protein that functions as a clathrin-associated sorting protein (CLASP) required for clathrin-mediated endocytosis of selected cargo proteins. Can bind and assemble clathrin, and binds simultaneously to phosphatidylinositol 4,5-bisphosphate (PtdIns(4,5)P2) and cargos containing non-phosphorylated NPXY internalization motifs, such as the LDL receptor, to recruit them to clathrin-coated pits. Can function in clathrin-mediated endocytosis independently of the AP-2 complex. Involved in endocytosis of integrin beta-1; this function seems to redundant with the AP-2 complex and seems to require DAB2 binding to endocytosis accessory EH domain-containing proteins such as EPS15, EPS15L1 and ITSN1. Involved in endocytosis of cystic fibrosis transmembrane conductance regulator/CFTR. Involved in endocytosis of megalin/LRP2 lipoprotein receptor during embryonal development. Required for recycling of the TGF-beta receptor. Involved in CFTR trafficking to the late endosome. Involved in several receptor-mediated signaling pathways. Involved in TGF-beta receptor signaling and facilitates phosphorylation of the signal transducer SMAD2. Mediates TFG-beta-stimulated JNK activation. May inhibit the canoniocal Wnt/beta-catenin signaling pathway by stabilizing the beta-catenin destruction complex through a competing association with axin preventing its dephosphorylation through protein phosphatase 1 (PP1). Sequesters LRP6 towards clathrin-mediated endocytosis, leading to inhibition of Wnt/beta-catenin signaling. May activate non-canonical Wnt signaling. In cell surface growth factor/Ras signaling pathways proposed to inhibit ERK activation by interrupting the binding of GRB2 to SOS1 and to inhibit SRC by preventing its activating phosphorylation at 'Tyr-419'. Proposed to be involved in modulation of androgen receptor (AR) signaling mediated by SRC activation; seems to compete with AR for interaction with SRC. Plays a role in the CSF-1 signal transduction pathway. Plays a role in cellular differentiation. Involved in cell positioning and formation of visceral endoderm (VE) during embryogenesis and proposed to be required in the VE to respond to Nodal signaling coming from the epiblast. Required for the epithelial to mesenchymal transition, a process necessary for proper embryonic development. May be involved in myeloid cell differentiation and can induce macrophage adhesion and spreading. May act as a tumor suppressor. This chain is Disabled homolog 2 (Dab2), found in Rattus norvegicus (Rat).